Here is a 693-residue protein sequence, read N- to C-terminus: Sulfite reductase 1 [ferredoxin], chloroplastic (693 aa).

Residues Met-1 to Thr-62 constitute a chloroplast transit peptide. [4Fe-4S] cluster is bound by residues Cys-502, Cys-508, Cys-548, and Cys-552. A siroheme-binding site is contributed by Cys-552.

The protein belongs to the nitrite and sulfite reductase 4Fe-4S domain family. In terms of assembly, monomer. Interacts with ferredoxin. Siroheme is required as a cofactor. It depends on [4Fe-4S] cluster as a cofactor. Post-translationally, phosphorylated; this phosphorylation reduces DNA-binding. As to expression, expressed in leaves, stems, roots and petals.

Its subcellular location is the plastid. It is found in the chloroplast stroma. It localises to the chloroplast nucleoid. The protein resides in the plastid stroma. It carries out the reaction hydrogen sulfide + 6 oxidized [2Fe-2S]-[ferredoxin] + 3 H2O = sulfite + 6 reduced [2Fe-2S]-[ferredoxin] + 7 H(+). Essential protein with sulfite reductase activity required in assimilatory sulfate reduction pathway during both primary and secondary metabolism and thus involved in development and growth. In terms of biological role, DNA-binding protein that binds to both double-stranded and single-stranded DNA without significant sequence specificity to reversibly repress the transcriptional activity of chloroplast nucleoids by promoting DNA compaction and possibly regulate DNA replication. This Nicotiana tabacum (Common tobacco) protein is Sulfite reductase 1 [ferredoxin], chloroplastic (SIR1).